We begin with the raw amino-acid sequence, 232 residues long: Probable dihydroorotate dehydrogenase B (NAD(+)), electron transfer subunit (232 aa).

The 86-residue stretch at 1 to 86 (MYYTRITQIE…RGAFGSAFTP (86 aa)) folds into the FAD-binding FR-type domain. Residues C202, C207, C210, and C219 each contribute to the [2Fe-2S] cluster site.

It belongs to the PyrK family. As to quaternary structure, heterotetramer of 2 PyrK and 2 PyrD type B subunits. It depends on [2Fe-2S] cluster as a cofactor. FAD is required as a cofactor.

The protein operates within pyrimidine metabolism; UMP biosynthesis via de novo pathway; orotate from (S)-dihydroorotate (NAD(+) route): step 1/1. Functionally, responsible for channeling the electrons from the oxidation of dihydroorotate from the FMN redox center in the PyrD type B subunit to the ultimate electron acceptor NAD(+). This Archaeoglobus fulgidus (strain ATCC 49558 / DSM 4304 / JCM 9628 / NBRC 100126 / VC-16) protein is Probable dihydroorotate dehydrogenase B (NAD(+)), electron transfer subunit.